Consider the following 339-residue polypeptide: Phosphoribosylformylglycinamidine cyclo-ligase (339 aa).

The protein belongs to the AIR synthase family.

The protein localises to the cytoplasm. The enzyme catalyses 2-formamido-N(1)-(5-O-phospho-beta-D-ribosyl)acetamidine + ATP = 5-amino-1-(5-phospho-beta-D-ribosyl)imidazole + ADP + phosphate + H(+). It functions in the pathway purine metabolism; IMP biosynthesis via de novo pathway; 5-amino-1-(5-phospho-D-ribosyl)imidazole from N(2)-formyl-N(1)-(5-phospho-D-ribosyl)glycinamide: step 2/2. The sequence is that of Phosphoribosylformylglycinamidine cyclo-ligase from Methanobrevibacter smithii (strain ATCC 35061 / DSM 861 / OCM 144 / PS).